The following is a 151-amino-acid chain: Probable cyclic pyranopterin monophosphate synthase (151 aa).

Residues 66 to 68 and 102 to 103 each bind substrate; these read MCH and ME. The active site involves Asp-117.

The protein belongs to the MoaC family. In terms of assembly, homohexamer; trimer of dimers.

It catalyses the reaction (8S)-3',8-cyclo-7,8-dihydroguanosine 5'-triphosphate = cyclic pyranopterin phosphate + diphosphate. It participates in cofactor biosynthesis; molybdopterin biosynthesis. Functionally, catalyzes the conversion of (8S)-3',8-cyclo-7,8-dihydroguanosine 5'-triphosphate to cyclic pyranopterin monophosphate (cPMP). The protein is Probable cyclic pyranopterin monophosphate synthase of Sulfurisphaera tokodaii (strain DSM 16993 / JCM 10545 / NBRC 100140 / 7) (Sulfolobus tokodaii).